Here is a 214-residue protein sequence, read N- to C-terminus: Ribonuclease P protein component 3 (214 aa).

This sequence belongs to the eukaryotic/archaeal RNase P protein component 3 family. As to quaternary structure, consists of a catalytic RNA component and at least 4-5 protein subunits. Forms a subcomplex with Rnp2 which stimulates the catalytic RNA.

It is found in the cytoplasm. The catalysed reaction is Endonucleolytic cleavage of RNA, removing 5'-extranucleotides from tRNA precursor.. Part of ribonuclease P, a protein complex that generates mature tRNA molecules by cleaving their 5'-ends. The RNA is catalytic, but its KM for pre-tRNA is 170-fold decreased in the presence of the 4 known protein subunits (Rnp1-4). The protein subunits also decrease the amount of Mg(2+) needed for activity. This Pyrococcus furiosus (strain ATCC 43587 / DSM 3638 / JCM 8422 / Vc1) protein is Ribonuclease P protein component 3.